The following is a 423-amino-acid chain: Histidine--tRNA ligase (423 aa).

Belongs to the class-II aminoacyl-tRNA synthetase family. In terms of assembly, homodimer.

It localises to the cytoplasm. It catalyses the reaction tRNA(His) + L-histidine + ATP = L-histidyl-tRNA(His) + AMP + diphosphate + H(+). In Halorhodospira halophila (strain DSM 244 / SL1) (Ectothiorhodospira halophila (strain DSM 244 / SL1)), this protein is Histidine--tRNA ligase.